We begin with the raw amino-acid sequence, 604 residues long: Sulfite reductase [NADPH] flavoprotein alpha-component (604 aa).

Residues 66-204 (VTVLSASQTG…AADGWTDNIA (139 aa)) enclose the Flavodoxin-like domain. Residues 72–77 (SQTGNA), 119–122 (STQG), and 155–164 (LGDSSYPNFC) each bind FMN. One can recognise an FAD-binding FR-type domain in the interval 239 to 453 (ADPFPAALLA…VERNDGFRLP (215 aa)). Residues Thr-327, Gln-361, 391 to 394 (RLYS), 409 to 411 (TVG), and 424 to 427 (GGAS) contribute to the FAD site. NADP(+) is bound by residues 524–525 (SR), 530–534 (KIYVQ), and Asp-566. Residue Tyr-604 coordinates FAD.

Belongs to the NADPH-dependent sulphite reductase flavoprotein subunit CysJ family. It in the N-terminal section; belongs to the flavodoxin family. The protein in the C-terminal section; belongs to the flavoprotein pyridine nucleotide cytochrome reductase family. As to quaternary structure, alpha(8)-beta(8). The alpha component is a flavoprotein, the beta component is a hemoprotein. FAD is required as a cofactor. FMN serves as cofactor.

The catalysed reaction is hydrogen sulfide + 3 NADP(+) + 3 H2O = sulfite + 3 NADPH + 4 H(+). It functions in the pathway sulfur metabolism; hydrogen sulfide biosynthesis; hydrogen sulfide from sulfite (NADPH route): step 1/1. Functionally, component of the sulfite reductase complex that catalyzes the 6-electron reduction of sulfite to sulfide. This is one of several activities required for the biosynthesis of L-cysteine from sulfate. The flavoprotein component catalyzes the electron flow from NADPH -&gt; FAD -&gt; FMN to the hemoprotein component. In Neisseria meningitidis serogroup A / serotype 4A (strain DSM 15465 / Z2491), this protein is Sulfite reductase [NADPH] flavoprotein alpha-component.